Here is an 86-residue protein sequence, read N- to C-terminus: Cell division topological specificity factor (86 aa).

The protein belongs to the MinE family.

In terms of biological role, prevents the cell division inhibition by proteins MinC and MinD at internal division sites while permitting inhibition at polar sites. This ensures cell division at the proper site by restricting the formation of a division septum at the midpoint of the long axis of the cell. This is Cell division topological specificity factor from Stenotrophomonas maltophilia (strain K279a).